The primary structure comprises 116 residues: MRHRNRVKKLGKPADQRRALLRALTTELIRHGRITTTLVRAKVVRSEVDKIITLAKDGSLAARRRALGYIYDKQLVHALFEQVSSRYGNRQGGYTRILHTVPRRGDNAEMAIIELV.

It belongs to the bacterial ribosomal protein bL17 family. In terms of assembly, part of the 50S ribosomal subunit. Contacts protein L32.

The chain is Large ribosomal subunit protein bL17 from Trichormus variabilis (strain ATCC 29413 / PCC 7937) (Anabaena variabilis).